A 358-amino-acid chain; its full sequence is Neutral protease 2 homolog MEP8 (358 aa).

The N-terminal stretch at 1-19 is a signal peptide; the sequence is MKLSSILLALAALVSPAFS. A propeptide spanning residues 20 to 179 is cleaved from the precursor; it reads YAISHLPRSE…EKAIKPVDKR (160 aa). 2 cysteine pairs are disulfide-bonded: Cys186/Cys256 and Cys263/Cys281. Position 305 (His305) interacts with Zn(2+). The active site involves Glu306. Positions 309 and 320 each coordinate Zn(2+).

Belongs to the peptidase M35 family. Requires Zn(2+) as cofactor.

The protein resides in the secreted. The catalysed reaction is Preferential cleavage of bonds with hydrophobic residues in P1'. Also 3-Asn-|-Gln-4 and 8-Gly-|-Ser-9 bonds in insulin B chain.. Its function is as follows. Secreted metalloproteinase that allows assimilation of proteinaceous substrates. Shows high activities on basic nuclear substrates such as histone and protamine. May be involved in virulence. The polypeptide is Neutral protease 2 homolog MEP8 (MEP8) (Coccidioides posadasii (strain C735) (Valley fever fungus)).